The following is a 203-amino-acid chain: Small ribosomal subunit protein uS5 (203 aa).

In terms of domain architecture, S5 DRBM spans 49–112; the sequence is FEERVVKIKR…KNANNNLIKV (64 aa).

Belongs to the universal ribosomal protein uS5 family. Part of the 30S ribosomal subunit. Contacts proteins S4 and S8.

With S4 and S12 plays an important role in translational accuracy. Functionally, located at the back of the 30S subunit body where it stabilizes the conformation of the head with respect to the body. The sequence is that of Small ribosomal subunit protein uS5 from Ureaplasma parvum serovar 3 (strain ATCC 700970).